A 95-amino-acid chain; its full sequence is MSVDAQTVRRIAHLARIAVSDAEVPPLQDELNAILAFVEQLGAVDVSGVEPMTSVTPMAMKQRDDAVTDGGYAREIVFNAPLSEDNYFLVPKVVE.

The protein belongs to the GatC family. As to quaternary structure, heterotrimer of A, B and C subunits.

It carries out the reaction L-glutamyl-tRNA(Gln) + L-glutamine + ATP + H2O = L-glutaminyl-tRNA(Gln) + L-glutamate + ADP + phosphate + H(+). The enzyme catalyses L-aspartyl-tRNA(Asn) + L-glutamine + ATP + H2O = L-asparaginyl-tRNA(Asn) + L-glutamate + ADP + phosphate + 2 H(+). Its function is as follows. Allows the formation of correctly charged Asn-tRNA(Asn) or Gln-tRNA(Gln) through the transamidation of misacylated Asp-tRNA(Asn) or Glu-tRNA(Gln) in organisms which lack either or both of asparaginyl-tRNA or glutaminyl-tRNA synthetases. The reaction takes place in the presence of glutamine and ATP through an activated phospho-Asp-tRNA(Asn) or phospho-Glu-tRNA(Gln). The chain is Aspartyl/glutamyl-tRNA(Asn/Gln) amidotransferase subunit C from Methylobacterium sp. (strain 4-46).